The following is a 324-amino-acid chain: Ribose 1,5-bisphosphate isomerase (324 aa).

Residues 22–25 (RGAG) and Arg65 contribute to the substrate site. Catalysis depends on Cys135, which acts as the Proton acceptor. Position 137–139 (137–139 (SKA)) interacts with substrate. Asp204 (proton donor) is an active-site residue. Lys240 is a binding site for substrate.

It belongs to the eIF-2B alpha/beta/delta subunits family. R15P isomerase subfamily.

The enzyme catalyses alpha-D-ribose 1,5-bisphosphate = D-ribulose 1,5-bisphosphate. Catalyzes the isomerization of ribose 1,5-bisphosphate (R15P) to ribulose 1,5-bisphosphate (RuBP), the CO(2) acceptor and substrate for RubisCO. Functions in an archaeal AMP degradation pathway, together with AMP phosphorylase and RubisCO. This Pyrococcus furiosus (strain ATCC 43587 / DSM 3638 / JCM 8422 / Vc1) protein is Ribose 1,5-bisphosphate isomerase.